The primary structure comprises 353 residues: UPF0283 membrane protein YcjF (353 aa).

Residues 1-19 are compositionally biased toward basic and acidic residues; the sequence is MSEPLKPRIDFAEPLKEEP. Residues 1–48 form a disordered region; sequence MSEPLKPRIDFAEPLKEEPTSAFKAQQTFSEAESHTFAPAAIDERPED. At 1 to 69 the chain is on the periplasmic side; that stretch reads MSEPLKPRID…LRPKRSLWRK (69 aa). Residues 70–90 form a helical membrane-spanning segment; the sequence is MVMGGLALFGASVVGQGVQWT. Residues 91–99 lie on the Cytoplasmic side of the membrane; that stretch reads MNAWQTQDW. The chain crosses the membrane as a helical span at residues 100 to 120; it reads VALGGCAAGALIVGAGVGSVV. The Periplasmic portion of the chain corresponds to 121-212; that stretch reads TEWWRLWRLR…ARREISRFAA (92 aa). Residues 213 to 233 form a helical membrane-spanning segment; sequence ESTLMIAVSPLALVDMAFIAW. Topologically, residues 234–353 are cytoplasmic; that stretch reads RNLRLINRIA…LQKSKSSPEK (120 aa).

The protein belongs to the UPF0283 family.

It localises to the cell inner membrane. In Salmonella typhi, this protein is UPF0283 membrane protein YcjF (ycjF).